The sequence spans 255 residues: tRNA (guanine-N(1)-)-methyltransferase (255 aa).

S-adenosyl-L-methionine contacts are provided by residues glycine 113 and 133–138 (IGDYVL).

Belongs to the RNA methyltransferase TrmD family. As to quaternary structure, homodimer.

It localises to the cytoplasm. It carries out the reaction guanosine(37) in tRNA + S-adenosyl-L-methionine = N(1)-methylguanosine(37) in tRNA + S-adenosyl-L-homocysteine + H(+). Functionally, specifically methylates guanosine-37 in various tRNAs. This Escherichia coli O81 (strain ED1a) protein is tRNA (guanine-N(1)-)-methyltransferase.